Consider the following 223-residue polypeptide: NAD(P)H-hydrate epimerase (223 aa).

One can recognise a YjeF N-terminal domain in the interval 9-211 (AIKLDEELMG…ELKDKLHLIL (203 aa)). 60 to 64 (NNGGD) contacts (6S)-NADPHX. K(+)-binding residues include Asn61 and Asp120. (6S)-NADPHX contacts are provided by residues 124 to 130 (GFSFKGP) and Asp153. Ser156 contributes to the K(+) binding site.

It belongs to the NnrE/AIBP family. The cofactor is K(+).

It catalyses the reaction (6R)-NADHX = (6S)-NADHX. It carries out the reaction (6R)-NADPHX = (6S)-NADPHX. Catalyzes the epimerization of the S- and R-forms of NAD(P)HX, a damaged form of NAD(P)H that is a result of enzymatic or heat-dependent hydration. This is a prerequisite for the S-specific NAD(P)H-hydrate dehydratase to allow the repair of both epimers of NAD(P)HX. This Entamoeba histolytica (strain ATCC 30459 / HM-1:IMSS / ABRM) protein is NAD(P)H-hydrate epimerase.